The chain runs to 153 residues: Putative pre-16S rRNA nuclease (153 aa).

It belongs to the YqgF nuclease family.

Its subcellular location is the cytoplasm. In terms of biological role, could be a nuclease involved in processing of the 5'-end of pre-16S rRNA. This chain is Putative pre-16S rRNA nuclease, found in Prochlorococcus marinus (strain MIT 9215).